Consider the following 80-residue polypeptide: Translation initiation factor IF-1, chloroplastic (80 aa).

The 74-residue stretch at 1–74 (MKEQKWIHEG…TRGRIIYRLR (74 aa)) folds into the S1-like domain.

Belongs to the IF-1 family. As to quaternary structure, component of the 30S ribosomal translation pre-initiation complex which assembles on the 30S ribosome in the order IF-2 and IF-3, IF-1 and N-formylmethionyl-tRNA(fMet); mRNA recruitment can occur at any time during PIC assembly.

The protein resides in the plastid. Its subcellular location is the chloroplast. Functionally, one of the essential components for the initiation of protein synthesis. Stabilizes the binding of IF-2 and IF-3 on the 30S subunit to which N-formylmethionyl-tRNA(fMet) subsequently binds. Helps modulate mRNA selection, yielding the 30S pre-initiation complex (PIC). Upon addition of the 50S ribosomal subunit IF-1, IF-2 and IF-3 are released leaving the mature 70S translation initiation complex. In Illicium parviflorum (Yellow anise tree), this protein is Translation initiation factor IF-1, chloroplastic.